The primary structure comprises 198 residues: Holliday junction resolvase RecU (198 aa).

The tract at residues 1-29 (MIRYPNGKSYQPKTAASSLQKKPSYSNRG) is disordered. The span at 8-29 (KSYQPKTAASSLQKKPSYSNRG) shows a compositional bias: polar residues. Mg(2+) is bound by residues Thr-83, Asp-85, Glu-98, and Gln-117.

Belongs to the RecU family. The cofactor is Mg(2+).

The protein resides in the cytoplasm. The enzyme catalyses Endonucleolytic cleavage at a junction such as a reciprocal single-stranded crossover between two homologous DNA duplexes (Holliday junction).. Endonuclease that resolves Holliday junction intermediates in genetic recombination. Cleaves mobile four-strand junctions by introducing symmetrical nicks in paired strands. Promotes annealing of linear ssDNA with homologous dsDNA. Required for DNA repair, homologous recombination and chromosome segregation. This Bacillus licheniformis (strain ATCC 14580 / DSM 13 / JCM 2505 / CCUG 7422 / NBRC 12200 / NCIMB 9375 / NCTC 10341 / NRRL NRS-1264 / Gibson 46) protein is Holliday junction resolvase RecU.